The sequence spans 280 residues: Phosphatidylglycerol--prolipoprotein diacylglyceryl transferase (280 aa).

The next 4 helical transmembrane spans lie at Leu26–Ala46, Phe71–Tyr91, Ile106–Leu126, and Gly132–Phe152. Residue Arg154 participates in a 1,2-diacyl-sn-glycero-3-phospho-(1'-sn-glycerol) binding. 3 helical membrane passes run Gly193–Leu213, Gly217–Phe237, and Trp251–Leu271.

This sequence belongs to the Lgt family.

It is found in the cell inner membrane. The enzyme catalyses L-cysteinyl-[prolipoprotein] + a 1,2-diacyl-sn-glycero-3-phospho-(1'-sn-glycerol) = an S-1,2-diacyl-sn-glyceryl-L-cysteinyl-[prolipoprotein] + sn-glycerol 1-phosphate + H(+). It participates in protein modification; lipoprotein biosynthesis (diacylglyceryl transfer). Functionally, catalyzes the transfer of the diacylglyceryl group from phosphatidylglycerol to the sulfhydryl group of the N-terminal cysteine of a prolipoprotein, the first step in the formation of mature lipoproteins. In Agrobacterium fabrum (strain C58 / ATCC 33970) (Agrobacterium tumefaciens (strain C58)), this protein is Phosphatidylglycerol--prolipoprotein diacylglyceryl transferase.